The primary structure comprises 420 residues: UDP-N-acetylglucosamine 1-carboxyvinyltransferase (420 aa).

22 to 23 (KN) is a binding site for phosphoenolpyruvate. Arg91 provides a ligand contact to UDP-N-acetyl-alpha-D-glucosamine. Cys115 functions as the Proton donor in the catalytic mechanism. Cys115 is modified (2-(S-cysteinyl)pyruvic acid O-phosphothioketal). Residues 120-124 (RPVDL), 160-163 (KVSV), Asp305, and Ile327 each bind UDP-N-acetyl-alpha-D-glucosamine.

The protein belongs to the EPSP synthase family. MurA subfamily.

The protein localises to the cytoplasm. It catalyses the reaction phosphoenolpyruvate + UDP-N-acetyl-alpha-D-glucosamine = UDP-N-acetyl-3-O-(1-carboxyvinyl)-alpha-D-glucosamine + phosphate. It participates in cell wall biogenesis; peptidoglycan biosynthesis. Functionally, cell wall formation. Adds enolpyruvyl to UDP-N-acetylglucosamine. In Pectobacterium carotovorum subsp. carotovorum (strain PC1), this protein is UDP-N-acetylglucosamine 1-carboxyvinyltransferase.